The following is a 210-amino-acid chain: Uridine kinase (210 aa).

13 to 20 is a binding site for ATP; that stretch reads GGSGSGKT.

It belongs to the uridine kinase family.

It localises to the cytoplasm. The catalysed reaction is uridine + ATP = UMP + ADP + H(+). It carries out the reaction cytidine + ATP = CMP + ADP + H(+). It participates in pyrimidine metabolism; CTP biosynthesis via salvage pathway; CTP from cytidine: step 1/3. The protein operates within pyrimidine metabolism; UMP biosynthesis via salvage pathway; UMP from uridine: step 1/1. This Oceanobacillus iheyensis (strain DSM 14371 / CIP 107618 / JCM 11309 / KCTC 3954 / HTE831) protein is Uridine kinase.